Reading from the N-terminus, the 360-residue chain is MKPSIVAKLEALHERHEEVQALLGDAGIIADQDRFRALSREYAQLSDVSRCFTDWQQVQDDIETAQMMLDDPEMREMAQEELREAKEKSEQLEQQLQVLLLPKDPDDERNAFLEVRAGTGGDEAALFAGDLFRMYSRYAEARRWRVEIMSMSEGEHGGYKEIIAKISGDGVYGRLKFESGGHRVQRVPATESQGRIHTSACTVAVMPELPEAELPDINPADLRIDTFRSSGAGGQHVNTTDSAIRITHLPTGIVVECQDERSQHKNKAKALSVLGARIHAAETAKRQQAEASTRRNLLGSGDRSDRNRTYNFPQGRVTDHRINLTLYRLDETMEGKLDMLIEPIVQEHLADLLAALSEQE.

Gln235 is modified (N5-methylglutamine). The disordered stretch occupies residues 284–313 (AKRQQAEASTRRNLLGSGDRSDRNRTYNFP).

This sequence belongs to the prokaryotic/mitochondrial release factor family. In terms of processing, methylated by PrmC. Methylation increases the termination efficiency of RF1.

The protein resides in the cytoplasm. Functionally, peptide chain release factor 1 directs the termination of translation in response to the peptide chain termination codons UAG and UAA. This is Peptide chain release factor 1 from Salmonella gallinarum (strain 287/91 / NCTC 13346).